The primary structure comprises 294 residues: tRNA pseudouridine synthase B (294 aa).

Aspartate 40 functions as the Nucleophile in the catalytic mechanism.

Belongs to the pseudouridine synthase TruB family. Type 1 subfamily.

It carries out the reaction uridine(55) in tRNA = pseudouridine(55) in tRNA. Its function is as follows. Responsible for synthesis of pseudouridine from uracil-55 in the psi GC loop of transfer RNAs. This chain is tRNA pseudouridine synthase B, found in Synechococcus elongatus (strain ATCC 33912 / PCC 7942 / FACHB-805) (Anacystis nidulans R2).